The following is a 497-amino-acid chain: Galactose-1-phosphate uridylyltransferase (497 aa).

It belongs to the galactose-1-phosphate uridylyltransferase type 2 family.

The protein resides in the cytoplasm. The catalysed reaction is alpha-D-galactose 1-phosphate + UDP-alpha-D-glucose = alpha-D-glucose 1-phosphate + UDP-alpha-D-galactose. Its pathway is carbohydrate metabolism; galactose metabolism. This Enterococcus faecalis (strain ATCC 700802 / V583) protein is Galactose-1-phosphate uridylyltransferase.